Consider the following 222-residue polypeptide: Cysteine protease inhibitor 1 (222 aa).

The N-terminal stretch at 1-26 (MKSINILSFLLLSSTLSLVAFARSFT) is a signal peptide. Positions 27–42 (SENPIVLPTTCHDDDN) are excised as a propeptide. Residues 29 to 34 (NPIVLP) carry the Vacuolar targeting signal motif. 2 disulfides stabilise this stretch: Cys84/Cys136 and Cys185/Cys191.

Belongs to the protease inhibitor I3 (leguminous Kunitz-type inhibitor) family. In terms of tissue distribution, tubers, leaves.

It localises to the vacuole. Functionally, potent inhibitor of cathepsin l (cysteine protease). Does not inhibit trypsin or chymotrypsin (serine proteases). May protect the plant by inhibiting proteases of invading organisms. This is Cysteine protease inhibitor 1 from Solanum tuberosum (Potato).